Reading from the N-terminus, the 149-residue chain is Cytochrome c-type biogenesis protein CcmE (149 aa).

At 1–7 the chain is on the cytoplasmic side; that stretch reads MTRKQKR. Residues 8–28 form a helical; Signal-anchor for type II membrane protein membrane-spanning segment; that stretch reads LAVIAGGVGFIMVAVLLVLFA. The Periplasmic segment spans residues 29-149; that stretch reads FGQSIAYFYM…GVWKGEGEAK (121 aa). Heme-binding residues include His123 and Tyr127.

The protein belongs to the CcmE/CycJ family.

The protein resides in the cell inner membrane. Heme chaperone required for the biogenesis of c-type cytochromes. Transiently binds heme delivered by CcmC and transfers the heme to apo-cytochromes in a process facilitated by CcmF and CcmH. This is Cytochrome c-type biogenesis protein CcmE from Allorhizobium ampelinum (strain ATCC BAA-846 / DSM 112012 / S4) (Agrobacterium vitis (strain S4)).